A 241-amino-acid polypeptide reads, in one-letter code: Tetrahydromethanopterin S-methyltransferase subunit A (241 aa).

The Cytoplasmic segment spans residues 1 to 220 (MAEKKEPAEG…HSGVLAGKIE (220 aa)). Residue histidine 85 coordinates 5-hydroxybenzimidazolylcob(I)amide. The helical transmembrane segment at 221–241 (GIMVGLVLSLFVLGLLLFGGM) threads the bilayer.

The protein belongs to the MtrA family. As to quaternary structure, the complex is composed of 8 subunits; MtrA, MtrB, MtrC, MtrD, MtrE, MtrF, MtrG and MtrH. It depends on 5-hydroxybenzimidazolylcob(I)amide as a cofactor.

The protein resides in the cell membrane. The catalysed reaction is 5-methyl-5,6,7,8-tetrahydromethanopterin + coenzyme M + 2 Na(+)(in) = 5,6,7,8-tetrahydromethanopterin + methyl-coenzyme M + 2 Na(+)(out). Its pathway is one-carbon metabolism; methanogenesis from CO(2); methyl-coenzyme M from 5,10-methylene-5,6,7,8-tetrahydromethanopterin: step 2/2. Its function is as follows. Part of a complex that catalyzes the formation of methyl-coenzyme M and tetrahydromethanopterin from coenzyme M and methyl-tetrahydromethanopterin. This is an energy-conserving, sodium-ion translocating step. The chain is Tetrahydromethanopterin S-methyltransferase subunit A from Methanohalobium evestigatum (strain ATCC BAA-1072 / DSM 3721 / NBRC 107634 / OCM 161 / Z-7303).